Here is a 275-residue protein sequence, read N- to C-terminus: Lectin (275 aa).

The N-terminal stretch at 1-30 (MASLQTQMISFYLIFLSILLTTIFFFKVNS) is a signal peptide. Residues aspartate 111 and glycine 129 each contribute to the D-glucose site. 2 residues coordinate Mn(2+): glutamate 149 and aspartate 151. Positions 151, 153, 155, and 159 each coordinate Ca(2+). The Mn(2+) site is built by aspartate 159 and histidine 166. Residues 211–217 (NSLEEEN) constitute a propeptide that is removed on maturation. The D-glucose site is built by glycine 246 and alanine 247. The propeptide occupies 270-275 (KQAADA).

Belongs to the leguminous lectin family. In terms of assembly, heterotetramer of two alpha and two beta chains. Post-translationally, the mature form consists of two chains, alpha and beta, produced by cleavage of the immature protein. These remain cleaved, yet fold together to form one subunit.

Functionally, D-mannose specific lectin. This is Lectin from Lens culinaris (Lentil).